The primary structure comprises 890 residues: DNA mismatch repair protein MutS (890 aa).

Residue 607 to 614 participates in ATP binding; that stretch reads GPNMSGKS. Residues 832-851 are disordered; sequence ESQLSFFGGEQSSKKQDKPL.

Belongs to the DNA mismatch repair MutS family.

In terms of biological role, this protein is involved in the repair of mismatches in DNA. It is possible that it carries out the mismatch recognition step. This protein has a weak ATPase activity. The polypeptide is DNA mismatch repair protein MutS (Bacillus cereus (strain B4264)).